The chain runs to 183 residues: Translocon-associated protein subunit beta (183 aa).

A signal peptide spans 1–17 (MRLLAVVVLALLAVSQA). Over 18–146 (EEGARLLASK…REFDRRFSPH (129 aa)) the chain is Lumenal. A glycan (N-linked (GlcNAc...) (high mannose) asparagine) is linked at N88. An N-linked (GlcNAc...) asparagine glycan is attached at N104. The helical transmembrane segment at 147–167 (FLDWAAFGVMTLPSIGIPLLL) threads the bilayer. Topologically, residues 168 to 183 (WYSSKRKYDTPKPKKN) are cytoplasmic.

This sequence belongs to the TRAP-beta family. Heterotetramer of TRAP-alpha, TRAP-beta, TRAP-delta and TRAP-gamma. Interacts with STING1.

Its subcellular location is the endoplasmic reticulum membrane. Its function is as follows. TRAP proteins are part of a complex whose function is to bind calcium to the ER membrane and thereby regulate the retention of ER resident proteins. This chain is Translocon-associated protein subunit beta (Ssr2), found in Mus musculus (Mouse).